A 413-amino-acid polypeptide reads, in one-letter code: Glutamyl-tRNA reductase (413 aa).

Substrate-binding positions include 57-60 (TCNR), Ser-113, 118-120 (DFE), and Gln-124. Cys-58 acts as the Nucleophile in catalysis. Residue 193–198 (GTGKIG) participates in NADP(+) binding.

Belongs to the glutamyl-tRNA reductase family. Homodimer.

The enzyme catalyses (S)-4-amino-5-oxopentanoate + tRNA(Glu) + NADP(+) = L-glutamyl-tRNA(Glu) + NADPH + H(+). It functions in the pathway porphyrin-containing compound metabolism; protoporphyrin-IX biosynthesis; 5-aminolevulinate from L-glutamyl-tRNA(Glu): step 1/2. Catalyzes the NADPH-dependent reduction of glutamyl-tRNA(Glu) to glutamate 1-semialdehyde (GSA). This is Glutamyl-tRNA reductase from Flavobacterium psychrophilum (strain ATCC 49511 / DSM 21280 / CIP 103535 / JIP02/86).